The following is a 133-amino-acid chain: Minor spike protein H (133 aa).

This sequence belongs to the microviridae H protein family.

The protein resides in the virion. Probably triggers with protein G the injection of the phage DNA into the host upon conformational changes induced by virus-host receptor interaction. The sequence is that of Minor spike protein H from Spiroplasma virus 4 (SpV4).